The primary structure comprises 598 residues: UvrABC system protein C (598 aa).

In terms of domain architecture, GIY-YIG spans aspartate 14–isoleucine 91. Positions aspartate 196–methionine 231 constitute a UVR domain.

Belongs to the UvrC family. In terms of assembly, interacts with UvrB in an incision complex.

It is found in the cytoplasm. Functionally, the UvrABC repair system catalyzes the recognition and processing of DNA lesions. UvrC both incises the 5' and 3' sides of the lesion. The N-terminal half is responsible for the 3' incision and the C-terminal half is responsible for the 5' incision. This Streptococcus pyogenes serotype M12 (strain MGAS2096) protein is UvrABC system protein C.